The chain runs to 243 residues: Phosphoribosylaminoimidazole-succinocarboxamide synthase (243 aa).

It belongs to the SAICAR synthetase family.

It catalyses the reaction 5-amino-1-(5-phospho-D-ribosyl)imidazole-4-carboxylate + L-aspartate + ATP = (2S)-2-[5-amino-1-(5-phospho-beta-D-ribosyl)imidazole-4-carboxamido]succinate + ADP + phosphate + 2 H(+). It functions in the pathway purine metabolism; IMP biosynthesis via de novo pathway; 5-amino-1-(5-phospho-D-ribosyl)imidazole-4-carboxamide from 5-amino-1-(5-phospho-D-ribosyl)imidazole-4-carboxylate: step 1/2. The chain is Phosphoribosylaminoimidazole-succinocarboxamide synthase from Thermosynechococcus vestitus (strain NIES-2133 / IAM M-273 / BP-1).